The sequence spans 990 residues: Serine/threonine-protein phosphatase 6 regulatory ankyrin repeat subunit B (990 aa).

ANK repeat units follow at residues 7 to 36 (ADQP…DVNA), 40 to 69 (EKRT…RVNA), 73 to 102 (MWLT…DVNA), 106 to 135 (NWQT…SVNV), 139 to 168 (GGRT…NINA), 172 to 201 (KDRR…EVTC), 205 to 234 (KGYT…EIDE), 238 to 267 (YGNT…NVNQ), 271 to 301 (NGFT…DVNI), 305 to 334 (DGKS…EIDC), 338 to 367 (DGNT…DTAK), 371 to 400 (HNMF…EIDT), 404 to 433 (FGRT…DFNK), 437 to 466 (RGRT…NINE), 470 to 499 (WGRT…NAEE), 531 to 560 (EGYN…NMFE), 566 to 595 (ATKS…DLDI), 599 to 628 (KGRT…SVTV), 633 to 662 (TKRT…NPDV), 666 to 695 (KGQT…SVDA), 699 to 728 (LGCT…SILC), 732 to 761 (RGRT…SEED), 768 to 797 (QGYT…FRKF), 800 to 829 (NSFS…ASIV), 835 to 864 (KGRT…QVNA), 868 to 898 (AGKT…DLTL), 902 to 931 (DSNT…EQSL), and 938 to 967 (SLQT…CVLA).

Protein phosphatase 6 (PP6) holoenzyme is proposed to be a heterotrimeric complex formed by the catalytic subunit, a SAPS domain-containing subunit (PP6R) and an ankyrin repeat-domain containing regulatory subunit (ARS).

Functionally, putative regulatory subunit of protein phosphatase 6 (PP6) that may be involved in the recognition of phosphoprotein substrates. This Gallus gallus (Chicken) protein is Serine/threonine-protein phosphatase 6 regulatory ankyrin repeat subunit B (ANKRD44).